Here is a 134-residue protein sequence, read N- to C-terminus: Large ribosomal subunit protein uL14 (134 aa).

Belongs to the universal ribosomal protein uL14 family. In the 70S ribosome, L14 and L19 interact and together make contacts with the 16S rRNA in bridges B5 and B8. Part of the 50S ribosomal subunit. Forms a cluster with proteins L3 and L19.

Its function is as follows. Forms part of two intersubunit bridges in the 70S ribosome. Binds to 23S rRNA. This chain is Large ribosomal subunit protein uL14, found in Deinococcus radiodurans (strain ATCC 13939 / DSM 20539 / JCM 16871 / CCUG 27074 / LMG 4051 / NBRC 15346 / NCIMB 9279 / VKM B-1422 / R1).